The following is a 283-amino-acid chain: Large ribosomal subunit protein uL2 (283 aa).

Disordered stretches follow at residues 1–59 (MSIK…GGHK) and 222–283 (RGVA…TGGQ).

This sequence belongs to the universal ribosomal protein uL2 family. Part of the 50S ribosomal subunit. Forms a bridge to the 30S subunit in the 70S ribosome.

Its function is as follows. One of the primary rRNA binding proteins. Required for association of the 30S and 50S subunits to form the 70S ribosome, for tRNA binding and peptide bond formation. It has been suggested to have peptidyltransferase activity; this is somewhat controversial. Makes several contacts with the 16S rRNA in the 70S ribosome. The polypeptide is Large ribosomal subunit protein uL2 (Salinibacter ruber (strain DSM 13855 / M31)).